The primary structure comprises 371 residues: Putative 26S proteasome regulatory subunit homolog MJ1494 (371 aa).

G161–T168 provides a ligand contact to ATP.

The protein belongs to the AAA ATPase family.

In terms of biological role, the 26S proteasome is involved in the ATP-dependent degradation of ubiquitinated proteins. The regulatory (or ATPase) complex confers ATP dependency and substrate specificity to the 26S complex. In Methanocaldococcus jannaschii (strain ATCC 43067 / DSM 2661 / JAL-1 / JCM 10045 / NBRC 100440) (Methanococcus jannaschii), this protein is Putative 26S proteasome regulatory subunit homolog MJ1494.